A 941-amino-acid chain; its full sequence is Coiled-coil domain-containing protein 39 (941 aa).

4 coiled-coil regions span residues 16–122 (AIPV…ENGI), 164–273 (AQQD…ESEI), 306–605 (QLKG…EIKV), and 665–825 (IKAA…EEQD). The interval 868-941 (PTASTKGSRQ…SNVKSKKSSK (74 aa)) is disordered. Low complexity-rich tracts occupy residues 871 to 903 (STKG…SQSS) and 914 to 934 (SSSL…SSNV). A phosphoserine mark is found at Ser-892 and Ser-900.

It belongs to the CCDC39 family. As to expression, mainly expressed in nasal brushings and, to a lesser extent, in lungs and testis.

The protein localises to the cytoplasm. It localises to the cytoskeleton. It is found in the cilium axoneme. In terms of biological role, required for assembly of dynein regulatory complex (DRC) and inner dynein arm (IDA) complexes, which are responsible for ciliary beat regulation, thereby playing a central role in motility in cilia and flagella. Probably acts together with CCDC40 to form a molecular ruler that determines the 96 nanometer (nm) repeat length and arrangements of components in cilia and flagella. Not required for outer dynein arm complexes assembly. The protein is Coiled-coil domain-containing protein 39 of Homo sapiens (Human).